Reading from the N-terminus, the 129-residue chain is MKEVIDTVGRRKTSVARVFMSPGKGKIVVNKLPVEEYFKDEFKRSQALKPLAVAEKQNDFDITINVKGGGLTGQSGAVSLAIARALVEFDESIRAALRPDRLLTRDPRMVERKKYGKKKARKSFQFSKR.

Positions 108–129 (RMVERKKYGKKKARKSFQFSKR) are disordered. Over residues 114 to 129 (KYGKKKARKSFQFSKR) the composition is skewed to basic residues.

It belongs to the universal ribosomal protein uS9 family.

This Chlorobaculum tepidum (strain ATCC 49652 / DSM 12025 / NBRC 103806 / TLS) (Chlorobium tepidum) protein is Small ribosomal subunit protein uS9.